The following is a 227-amino-acid chain: UPF0173 metal-dependent hydrolase BALH_4194 (227 aa).

The protein belongs to the UPF0173 family.

The chain is UPF0173 metal-dependent hydrolase BALH_4194 from Bacillus thuringiensis (strain Al Hakam).